A 451-amino-acid polypeptide reads, in one-letter code: FAD-dependent monooxygenase adrH (451 aa).

FAD contacts are provided by E39, G53, and R112. Residue Y196 is part of the active site. Positions 288 and 301 each coordinate FAD. N385 is a glycosylation site (N-linked (GlcNAc...) asparagine). Residues T426–L446 traverse the membrane as a helical segment.

Belongs to the paxM FAD-dependent monooxygenase family. FAD serves as cofactor.

It is found in the membrane. It participates in secondary metabolite biosynthesis; terpenoid biosynthesis. In terms of biological role, FAD-dependent monooxygenase; part of the gene cluster that mediates the biosynthesis of andrastins, meroterpenoid compounds that exhibit inhibitory activity against ras farnesyltransferase, suggesting that they could be promising leads for antitumor agents. The first step of the pathway is the synthesis of 3,5-dimethylorsellinic acid (DMOA) by the polyketide synthase adrD via condensation of one acetyl-CoA starter unit with 3 malonyl-CoA units and 2 methylations. DMAO is then converted to farnesyl-DMAO by the prenyltransferase adrG. The methyltransferase adrK catalyzes the methylation of the carboxyl group of farnesyl-DMAO to farnesyl-DMAO methyl ester which is further converted to epoxyfarnesyl-DMAO methyl ester by the FAD-dependent monooxygenase adrH. The terpene cyclase adrI then catalyzes the carbon skeletal rearrangement to generate the andrastin E, the first compound in the pathway having the andrastin scaffold, with the tetracyclic ring system. The post-cyclization tailoring enzymes adrF, adrE, adrJ, and adrA, are involved in the conversion of andrastin E into andrastin A. The short chain dehydrogenase adrF is responsible for the oxidation of the C-3 a hydroxyl group of andrastin E to yield the corresponding ketone, andrastin D. The ketoreductase adrE stereoselectively reduces the carbonyl moiety to reverse the stereochemistry of the C-3 position to yield andrastin F. The acetyltransferase adrJ is the acetyltransferase that attaches the acetyl group to the C-3 hydroxyl group of andrastin F to yield andrastin C. Finally, the cytochrome P450 monooxygenase adrA catalyzes two sequential oxidation reactions of the C-23 methyl group, to generate the corresponding alcohol andrastin B, and aldehyde andrastin A. This chain is FAD-dependent monooxygenase adrH, found in Penicillium rubens (strain ATCC 28089 / DSM 1075 / NRRL 1951 / Wisconsin 54-1255) (Penicillium chrysogenum).